The sequence spans 259 residues: DNA utilization protein HofM (259 aa).

Functionally, required for the use of extracellular DNA as a nutrient. The sequence is that of DNA utilization protein HofM (hofM) from Escherichia coli (strain K12).